Here is a 383-residue protein sequence, read N- to C-terminus: 8-amino-7-oxononanoate synthase (383 aa).

Substrate is bound at residue arginine 22. 109–110 provides a ligand contact to pyridoxal 5'-phosphate; it reads GF. Histidine 134 is a substrate binding site. Residues serine 178, histidine 206, and threonine 232 each contribute to the pyridoxal 5'-phosphate site. Position 235 is an N6-(pyridoxal phosphate)lysine (lysine 235). A substrate-binding site is contributed by threonine 348.

The protein belongs to the class-II pyridoxal-phosphate-dependent aminotransferase family. BioF subfamily. Homodimer. Requires pyridoxal 5'-phosphate as cofactor.

It carries out the reaction 6-carboxyhexanoyl-[ACP] + L-alanine + H(+) = (8S)-8-amino-7-oxononanoate + holo-[ACP] + CO2. The protein operates within cofactor biosynthesis; biotin biosynthesis. In terms of biological role, catalyzes the decarboxylative condensation of pimeloyl-[acyl-carrier protein] and L-alanine to produce 8-amino-7-oxononanoate (AON), [acyl-carrier protein], and carbon dioxide. The chain is 8-amino-7-oxononanoate synthase from Vibrio parahaemolyticus serotype O3:K6 (strain RIMD 2210633).